The primary structure comprises 458 residues: Bifunctional protein GlmU (458 aa).

The tract at residues 1-232 (MISPLSVIIL…TFEIEGVNNR (232 aa)) is pyrophosphorylase. UDP-N-acetyl-alpha-D-glucosamine is bound by residues 10 to 13 (LAAG), lysine 24, glutamine 79, 84 to 85 (GT), 106 to 108 (YGD), glycine 142, glutamate 157, asparagine 172, and asparagine 230. Aspartate 108 contributes to the Mg(2+) binding site. A Mg(2+)-binding site is contributed by asparagine 230. Positions 233–253 (QQLASLERTWQGKLVADLQEA) are linker. Residues 254-458 (GVQFADPTRV…KDNFQRPTKK (205 aa)) are N-acetyltransferase. UDP-N-acetyl-alpha-D-glucosamine is bound by residues arginine 336 and lysine 354. Histidine 366 functions as the Proton acceptor in the catalytic mechanism. The UDP-N-acetyl-alpha-D-glucosamine site is built by tyrosine 369 and asparagine 380. Acetyl-CoA is bound by residues alanine 383, 389–390 (NY), serine 408, alanine 426, and arginine 443.

In the N-terminal section; belongs to the N-acetylglucosamine-1-phosphate uridyltransferase family. It in the C-terminal section; belongs to the transferase hexapeptide repeat family. Homotrimer. It depends on Mg(2+) as a cofactor.

The protein localises to the cytoplasm. The catalysed reaction is alpha-D-glucosamine 1-phosphate + acetyl-CoA = N-acetyl-alpha-D-glucosamine 1-phosphate + CoA + H(+). The enzyme catalyses N-acetyl-alpha-D-glucosamine 1-phosphate + UTP + H(+) = UDP-N-acetyl-alpha-D-glucosamine + diphosphate. It functions in the pathway nucleotide-sugar biosynthesis; UDP-N-acetyl-alpha-D-glucosamine biosynthesis; N-acetyl-alpha-D-glucosamine 1-phosphate from alpha-D-glucosamine 6-phosphate (route II): step 2/2. The protein operates within nucleotide-sugar biosynthesis; UDP-N-acetyl-alpha-D-glucosamine biosynthesis; UDP-N-acetyl-alpha-D-glucosamine from N-acetyl-alpha-D-glucosamine 1-phosphate: step 1/1. Its pathway is bacterial outer membrane biogenesis; LPS lipid A biosynthesis. Its function is as follows. Catalyzes the last two sequential reactions in the de novo biosynthetic pathway for UDP-N-acetylglucosamine (UDP-GlcNAc). The C-terminal domain catalyzes the transfer of acetyl group from acetyl coenzyme A to glucosamine-1-phosphate (GlcN-1-P) to produce N-acetylglucosamine-1-phosphate (GlcNAc-1-P), which is converted into UDP-GlcNAc by the transfer of uridine 5-monophosphate (from uridine 5-triphosphate), a reaction catalyzed by the N-terminal domain. The sequence is that of Bifunctional protein GlmU from Psychrobacter arcticus (strain DSM 17307 / VKM B-2377 / 273-4).